Reading from the N-terminus, the 115-residue chain is NADH-ubiquinone oxidoreductase chain 3 (115 aa).

Helical transmembrane passes span 3–23, 55–75, and 84–104; these read LMLALTVNTLLTALLTIIMFW, FFLVAITFLLFDLEIALLLSL, and LPTMIKTSIMFITILALSLAY.

This sequence belongs to the complex I subunit 3 family. As to quaternary structure, core subunit of respiratory chain NADH dehydrogenase (Complex I) which is composed of 45 different subunits. Interacts with TMEM186. Interacts with TMEM242.

Its subcellular location is the mitochondrion inner membrane. The catalysed reaction is a ubiquinone + NADH + 5 H(+)(in) = a ubiquinol + NAD(+) + 4 H(+)(out). In terms of biological role, core subunit of the mitochondrial membrane respiratory chain NADH dehydrogenase (Complex I) which catalyzes electron transfer from NADH through the respiratory chain, using ubiquinone as an electron acceptor. Essential for the catalytic activity of complex I. The polypeptide is NADH-ubiquinone oxidoreductase chain 3 (Papio hamadryas (Hamadryas baboon)).